Reading from the N-terminus, the 76-residue chain is MRRHDIIIKLLLLMCLLLSRFVTRECQEVHFKIGPAKIIAKPNNARVMPTWGEEKKWHKHPSGPNPTGNRHPPVKH.

A signal peptide spans 1–26; that stretch reads MRRHDIIIKLLLLMCLLLSRFVTREC. A disordered region spans residues 53–76; it reads EEKKWHKHPSGPNPTGNRHPPVKH. P61 and P64 each carry hydroxyproline. P64 carries O-linked (Ara...) hydroxyproline glycosylation.

It belongs to the CLV3/ESR signal peptide family. In terms of processing, the O-glycosylation (arabinosylation) of the hydroxyproline Pro-64 enhances binding affinity of the CLE46p peptide for its receptor.

It localises to the secreted. It is found in the extracellular space. Functionally, extracellular signal peptide that regulates cell fate. The sequence is that of CLAVATA3/ESR (CLE)-related protein 46 from Arabidopsis thaliana (Mouse-ear cress).